Consider the following 254-residue polypeptide: Ribosomal RNA small subunit methyltransferase A (254 aa).

6 residues coordinate S-adenosyl-L-methionine: Asn12, Leu14, Gly38, Glu59, Asp83, and Asn100.

This sequence belongs to the class I-like SAM-binding methyltransferase superfamily. rRNA adenine N(6)-methyltransferase family. RsmA subfamily.

The protein localises to the cytoplasm. The catalysed reaction is adenosine(1518)/adenosine(1519) in 16S rRNA + 4 S-adenosyl-L-methionine = N(6)-dimethyladenosine(1518)/N(6)-dimethyladenosine(1519) in 16S rRNA + 4 S-adenosyl-L-homocysteine + 4 H(+). Its function is as follows. Specifically dimethylates two adjacent adenosines (A1518 and A1519) in the loop of a conserved hairpin near the 3'-end of 16S rRNA in the 30S particle. May play a critical role in biogenesis of 30S subunits. The polypeptide is Ribosomal RNA small subunit methyltransferase A (Mycoplasma mobile (strain ATCC 43663 / 163K / NCTC 11711) (Mesomycoplasma mobile)).